We begin with the raw amino-acid sequence, 410 residues long: Serine hydroxymethyltransferase (410 aa).

Residues L119 and G123–L125 contribute to the (6S)-5,6,7,8-tetrahydrofolate site. K228 bears the N6-(pyridoxal phosphate)lysine mark. Residue S351–F353 coordinates (6S)-5,6,7,8-tetrahydrofolate.

The protein belongs to the SHMT family. In terms of assembly, homodimer. It depends on pyridoxal 5'-phosphate as a cofactor.

It is found in the cytoplasm. The catalysed reaction is (6R)-5,10-methylene-5,6,7,8-tetrahydrofolate + glycine + H2O = (6S)-5,6,7,8-tetrahydrofolate + L-serine. It functions in the pathway one-carbon metabolism; tetrahydrofolate interconversion. The protein operates within amino-acid biosynthesis; glycine biosynthesis; glycine from L-serine: step 1/1. In terms of biological role, catalyzes the reversible interconversion of serine and glycine with tetrahydrofolate (THF) serving as the one-carbon carrier. This reaction serves as the major source of one-carbon groups required for the biosynthesis of purines, thymidylate, methionine, and other important biomolecules. Also exhibits THF-independent aldolase activity toward beta-hydroxyamino acids, producing glycine and aldehydes, via a retro-aldol mechanism. The protein is Serine hydroxymethyltransferase of Clostridium perfringens (strain 13 / Type A).